The sequence spans 187 residues: Elongation factor P (187 aa).

The protein belongs to the elongation factor P family.

It is found in the cytoplasm. It functions in the pathway protein biosynthesis; polypeptide chain elongation. Its function is as follows. Involved in peptide bond synthesis. Stimulates efficient translation and peptide-bond synthesis on native or reconstituted 70S ribosomes in vitro. Probably functions indirectly by altering the affinity of the ribosome for aminoacyl-tRNA, thus increasing their reactivity as acceptors for peptidyl transferase. This is Elongation factor P from Acidothermus cellulolyticus (strain ATCC 43068 / DSM 8971 / 11B).